A 121-amino-acid polypeptide reads, in one-letter code: Large ribosomal subunit protein bL19 (121 aa).

This sequence belongs to the bacterial ribosomal protein bL19 family.

This protein is located at the 30S-50S ribosomal subunit interface and may play a role in the structure and function of the aminoacyl-tRNA binding site. This chain is Large ribosomal subunit protein bL19 (rplS), found in Chlamydia pneumoniae (Chlamydophila pneumoniae).